The primary structure comprises 206 residues: Eukaryotic translation initiation factor isoform 4E-2 (206 aa).

C103 and C142 are oxidised to a cystine.

Belongs to the eukaryotic initiation factor 4E family. EIF4F is a multi-subunit complex, the composition of which varies with external and internal environmental conditions. It is composed of at least EIF4A, EIF4E and EIF4G. EIF4E is also known to interact with other partners. In higher plants two isoforms of EIF4F have been identified, named isoform EIF4F and isoform EIF(iso)4F. Isoform EIF4F has subunits p220 and p26, whereas isoform EIF(iso)4F has subunits p82 and p28. According to the redox status, the Cys-103-Cys-142 disulfide bridge may have a role in regulating protein function by affecting its ability to bind capped mRNA.

In terms of biological role, recognizes and binds the 7-methylguanosine-containing mRNA cap during an early step in the initiation of protein synthesis and facilitates ribosome binding by inducing the unwinding of the mRNAs secondary structures. This is Eukaryotic translation initiation factor isoform 4E-2 from Oryza sativa subsp. japonica (Rice).